The following is a 250-amino-acid chain: Ubiquinone/menaquinone biosynthesis C-methyltransferase UbiE (250 aa).

S-adenosyl-L-methionine-binding positions include Thr-73, Asp-94, 122-123 (NA), and Ser-139.

It belongs to the class I-like SAM-binding methyltransferase superfamily. MenG/UbiE family.

The enzyme catalyses a 2-demethylmenaquinol + S-adenosyl-L-methionine = a menaquinol + S-adenosyl-L-homocysteine + H(+). It carries out the reaction a 2-methoxy-6-(all-trans-polyprenyl)benzene-1,4-diol + S-adenosyl-L-methionine = a 5-methoxy-2-methyl-3-(all-trans-polyprenyl)benzene-1,4-diol + S-adenosyl-L-homocysteine + H(+). It participates in quinol/quinone metabolism; menaquinone biosynthesis; menaquinol from 1,4-dihydroxy-2-naphthoate: step 2/2. It functions in the pathway cofactor biosynthesis; ubiquinone biosynthesis. Its function is as follows. Methyltransferase required for the conversion of demethylmenaquinol (DMKH2) to menaquinol (MKH2) and the conversion of 2-polyprenyl-6-methoxy-1,4-benzoquinol (DDMQH2) to 2-polyprenyl-3-methyl-6-methoxy-1,4-benzoquinol (DMQH2). The sequence is that of Ubiquinone/menaquinone biosynthesis C-methyltransferase UbiE from Francisella tularensis subsp. mediasiatica (strain FSC147).